A 346-amino-acid polypeptide reads, in one-letter code: MAHRPRWTLSQVTELFEKPLLDLLFEAQQVHRQHFDPRQVQVSTLLSIKTGACPEDCKYCPQSSRYKTGLEAERLMEVEQVLESARKAKAAGSTRFCMGAAWKNPHERDMPYLEQMVQGVKAMGLEACMTLGTLSESQAQRLANAGLDYYNHNLDTSPEFYGNIITTRTYQERLDTLEKVREAGIKVCSGGIVGLGETVKDRAGLLLQLANLPTPPESVPINMLVKVKGTPLADNDDVDAFDFIRTIAVARIMMPTSYVRLSAGREQMNEQTQAMCFMAGANSIFYGCKLLTTPNPEEDKDLQLFRKLGLNPQQTAVLAGDNEQQQRLEQALMTPDTDEYYNAAAL.

The Radical SAM core domain maps to 38–256 (RQVQVSTLLS…IAVARIMMPT (219 aa)). Residues cysteine 53, cysteine 57, and cysteine 60 each contribute to the [4Fe-4S] cluster site. Cysteine 97, cysteine 128, cysteine 188, and arginine 260 together coordinate [2Fe-2S] cluster.

Belongs to the radical SAM superfamily. Biotin synthase family. Homodimer. Requires [4Fe-4S] cluster as cofactor. It depends on [2Fe-2S] cluster as a cofactor.

It catalyses the reaction (4R,5S)-dethiobiotin + (sulfur carrier)-SH + 2 reduced [2Fe-2S]-[ferredoxin] + 2 S-adenosyl-L-methionine = (sulfur carrier)-H + biotin + 2 5'-deoxyadenosine + 2 L-methionine + 2 oxidized [2Fe-2S]-[ferredoxin]. Its pathway is cofactor biosynthesis; biotin biosynthesis; biotin from 7,8-diaminononanoate: step 2/2. Its function is as follows. Catalyzes the conversion of dethiobiotin (DTB) to biotin by the insertion of a sulfur atom into dethiobiotin via a radical-based mechanism. This Escherichia coli O6:H1 (strain CFT073 / ATCC 700928 / UPEC) protein is Biotin synthase.